A 603-amino-acid polypeptide reads, in one-letter code: NADPH-dependent diflavin oxidoreductase 1 (603 aa).

The region spanning 10 to 155 (VTILYGSETG…YYSEWETNLL (146 aa)) is the Flavodoxin-like domain. FMN-binding positions include 16–21 (SETGNA), 64–67 (STTG), 102–111 (IGDSSYPKFN), and Glu137. The FAD-binding FR-type domain occupies 209–451 (TNLLLGSVKA…HKSNLKFELP (243 aa)). FAD is bound by residues Arg359, 390 to 393 (RLFS), and 422 to 425 (GLCT). Residues Thr465 and 521–522 (SR) each bind NADP(+). Trp603 lines the FAD pocket.

The protein belongs to the NADPH-dependent diflavin oxidoreductase NDOR1 family. It in the N-terminal section; belongs to the flavodoxin family. This sequence in the C-terminal section; belongs to the flavoprotein pyridine nucleotide cytochrome reductase family. As to quaternary structure, interacts with DRE2; as part of the cytosolic iron-sulfur (Fe-S) protein assembly (CIA) machinery. It depends on FAD as a cofactor. FMN serves as cofactor.

Its subcellular location is the cytoplasm. It is found in the mitochondrion. It catalyses the reaction 2 oxidized [2Fe-2S]-[protein] + NADPH = 2 reduced [2Fe-2S]-[protein] + NADP(+) + H(+). NADPH-dependent reductase which is a central component of the cytosolic iron-sulfur (Fe-S) protein assembly (CIA) machinery. Transfers electrons from NADPH via its FAD and FMN prosthetic groups to the [2Fe-2S] cluster of DRE2, another key component of the CIA machinery. In turn, this reduced cluster provides electrons for assembly of cytosolic iron-sulfur cluster proteins. Positively controls H(2)O(2)-induced cell death. In Debaryomyces hansenii (strain ATCC 36239 / CBS 767 / BCRC 21394 / JCM 1990 / NBRC 0083 / IGC 2968) (Yeast), this protein is NADPH-dependent diflavin oxidoreductase 1.